A 435-amino-acid chain; its full sequence is Hyaluronidase-1 (435 aa).

Residues 1–21 (MAAHLLPICALFLTLLDMAQG) form the signal peptide. 2 cysteine pairs are disulfide-bonded: Cys-43–Cys-333 and Cys-207–Cys-221. Asn-99 carries N-linked (GlcNAc...) asparagine glycosylation. The active-site Proton donor is Glu-131. N-linked (GlcNAc...) asparagine glycans are attached at residues Asn-216 and Asn-350. Residues 354–430 (GALLCSQALC…YPGWQAPWCE (77 aa)) enclose the EGF-like domain. 3 disulfides stabilise this stretch: Cys-358-Cys-369, Cys-363-Cys-418, and Cys-420-Cys-429.

It belongs to the glycosyl hydrolase 56 family. In terms of tissue distribution, highly expressed in the liver, kidney and heart. Weakly expressed in lung, placenta and skeletal muscle. No expression detected in adult brain. Isoform 1 is expressed only in bladder and prostate cancer cells, G2/G3 bladder tumor tissues and lymph node specimens showing tumor invasive tumors cells. Isoform 3, isoform 4, isoform 5 and isoform 6 are expressed in normal bladder and bladder tumor tissues.

It localises to the secreted. Its subcellular location is the lysosome. The catalysed reaction is Random hydrolysis of (1-&gt;4)-linkages between N-acetyl-beta-D-glucosamine and D-glucuronate residues in hyaluronate.. Its function is as follows. May have a role in promoting tumor progression. May block the TGFB1-enhanced cell growth. The protein is Hyaluronidase-1 (HYAL1) of Homo sapiens (Human).